The chain runs to 268 residues: Tryptophan synthase alpha chain (268 aa).

Residues Glu-49 and Asp-60 each act as proton acceptor in the active site.

The protein belongs to the TrpA family. As to quaternary structure, tetramer of two alpha and two beta chains.

It carries out the reaction (1S,2R)-1-C-(indol-3-yl)glycerol 3-phosphate + L-serine = D-glyceraldehyde 3-phosphate + L-tryptophan + H2O. The protein operates within amino-acid biosynthesis; L-tryptophan biosynthesis; L-tryptophan from chorismate: step 5/5. Its function is as follows. The alpha subunit is responsible for the aldol cleavage of indoleglycerol phosphate to indole and glyceraldehyde 3-phosphate. The chain is Tryptophan synthase alpha chain from Pseudomonas aeruginosa (strain UCBPP-PA14).